We begin with the raw amino-acid sequence, 209 residues long: Ribosomal RNA large subunit methyltransferase E (209 aa).

The S-adenosyl-L-methionine site is built by Gly-63, Trp-65, Asp-83, Asp-99, and Asp-124. Lys-164 serves as the catalytic Proton acceptor.

The protein belongs to the class I-like SAM-binding methyltransferase superfamily. RNA methyltransferase RlmE family.

The protein resides in the cytoplasm. It catalyses the reaction uridine(2552) in 23S rRNA + S-adenosyl-L-methionine = 2'-O-methyluridine(2552) in 23S rRNA + S-adenosyl-L-homocysteine + H(+). Its function is as follows. Specifically methylates the uridine in position 2552 of 23S rRNA at the 2'-O position of the ribose in the fully assembled 50S ribosomal subunit. This chain is Ribosomal RNA large subunit methyltransferase E, found in Shewanella sp. (strain ANA-3).